A 249-amino-acid chain; its full sequence is uncharacterized protein (249 aa).

Residues 51-67 show a composition bias toward polar residues; that stretch reads IPKDSLTNGKSSKNCMS. Disordered regions lie at residues 51-131 and 205-240; these read IPKD…DSPV and YLNASLSEDDTDSIVGTDYSEEEKESISETESSSDG. The span at 93–106 shows a compositional bias: low complexity; that stretch reads SFQSMNSSMSSSTQ. Residues 110–129 are compositionally biased toward basic and acidic residues; the sequence is RILDEKNKDQSSSNENDRDS.

The protein belongs to the asfivirus DP238L family.

This is an uncharacterized protein from African swine fever virus (isolate Tick/Malawi/Lil 20-1/1983) (ASFV).